Reading from the N-terminus, the 398-residue chain is 1-deoxy-D-xylulose 5-phosphate reductoisomerase (398 aa).

The NADPH site is built by Thr-10, Gly-11, Ser-12, Ile-13, Lys-37, Asn-38, and Asn-124. 1-deoxy-D-xylulose 5-phosphate is bound at residue Lys-125. Glu-126 contributes to the NADPH binding site. Asp-150 serves as a coordination point for Mn(2+). 1-deoxy-D-xylulose 5-phosphate contacts are provided by Ser-151, Glu-152, Ser-186, and His-209. Glu-152 lines the Mn(2+) pocket. Gly-215 provides a ligand contact to NADPH. Ser-222, Asn-227, Lys-228, and Glu-231 together coordinate 1-deoxy-D-xylulose 5-phosphate. Glu-231 is a Mn(2+) binding site.

This sequence belongs to the DXR family. Homodimer. Mg(2+) serves as cofactor. The cofactor is Mn(2+).

It catalyses the reaction 2-C-methyl-D-erythritol 4-phosphate + NADP(+) = 1-deoxy-D-xylulose 5-phosphate + NADPH + H(+). The protein operates within isoprenoid biosynthesis; isopentenyl diphosphate biosynthesis via DXP pathway; isopentenyl diphosphate from 1-deoxy-D-xylulose 5-phosphate: step 1/6. In terms of biological role, catalyzes the NADPH-dependent rearrangement and reduction of 1-deoxy-D-xylulose-5-phosphate (DXP) to 2-C-methyl-D-erythritol 4-phosphate (MEP). This is 1-deoxy-D-xylulose 5-phosphate reductoisomerase from Buchnera aphidicola subsp. Schizaphis graminum (strain Sg).